Here is an 891-residue protein sequence, read N- to C-terminus: Alanine--tRNA ligase (891 aa).

Residues H569, H573, C671, and H675 each contribute to the Zn(2+) site.

Belongs to the class-II aminoacyl-tRNA synthetase family. Homotetramer. It depends on Zn(2+) as a cofactor.

It is found in the cytoplasm. The enzyme catalyses tRNA(Ala) + L-alanine + ATP = L-alanyl-tRNA(Ala) + AMP + diphosphate. Functionally, catalyzes the attachment of alanine to tRNA(Ala) in a two-step reaction: alanine is first activated by ATP to form Ala-AMP and then transferred to the acceptor end of tRNA(Ala). Also edits incorrectly charged Ser-tRNA(Ala) and Gly-tRNA(Ala) via its editing domain. The protein is Alanine--tRNA ligase of Blochmanniella floridana.